The sequence spans 304 residues: Quinolinate synthase (304 aa).

Residues His24 and Ser41 each coordinate iminosuccinate. Cys86 contributes to the [4Fe-4S] cluster binding site. Residues Tyr112 to Asn114 and Ser129 contribute to the iminosuccinate site. Cys171 is a binding site for [4Fe-4S] cluster. Residues His197 to Glu199 and Thr214 contribute to the iminosuccinate site. Cys259 is a [4Fe-4S] cluster binding site.

Belongs to the quinolinate synthase family. Type 2 subfamily. It depends on [4Fe-4S] cluster as a cofactor.

Its subcellular location is the cytoplasm. The enzyme catalyses iminosuccinate + dihydroxyacetone phosphate = quinolinate + phosphate + 2 H2O + H(+). Its pathway is cofactor biosynthesis; NAD(+) biosynthesis; quinolinate from iminoaspartate: step 1/1. Functionally, catalyzes the condensation of iminoaspartate with dihydroxyacetone phosphate to form quinolinate. The protein is Quinolinate synthase of Geobacter metallireducens (strain ATCC 53774 / DSM 7210 / GS-15).